Consider the following 326-residue polypeptide: Cyclin-dependent kinase 6 (326 aa).

Met1 bears the N-acetylmethionine mark. Residues Tyr13 and Tyr24 each carry the phosphotyrosine modification. The region spanning 13–300 (YECVAEIGEG…AYSALSHPYF (288 aa)) is the Protein kinase domain. Residues 19–27 (IGEGAYGKV) and Lys43 each bind ATP. Thr49 and Thr70 each carry phosphothreonine. Catalysis depends on Asp145, which acts as the Proton acceptor. Residue Thr177 is modified to Phosphothreonine. The residue at position 264 (Lys264) is an N6-acetyllysine. At Thr325 the chain carries Phosphothreonine.

It belongs to the protein kinase superfamily. CMGC Ser/Thr protein kinase family. CDC2/CDKX subfamily. Interaction with D-type G1 cyclins. Cyclin binding promotes enzyme activation by phosphorylation at Thr-177. Binds to RUNX1, CDKN2D, FBXO7 and CDKN2C/p18-INK4c. Forms a cytoplasmic complex with Hsp90/HSP90AB1 and CDC37. FBXO7-binding promotes D-type cyclin binding. Interacts with Kaposi's sarcoma herpesvirus (KSHV) V-cyclin and herpesvirus saimiri (V-cyclin/ECLF2); the CDK6/V-cyclin complex phosphorylates NPM1 and thus lead to viral reactivation by reducing viral LANA levels. Post-translationally, thr-177 phosphorylation and Tyr-24 dephosphorylation promotes kinase activity. Expressed ubiquitously. Accumulates in squamous cell carcinomas, proliferating hematopoietic progenitor cells, beta-cells of pancreatic islets of Langerhans, and neuroblastomas. Reduced levels in differentiating cells.

The protein localises to the cytoplasm. The protein resides in the nucleus. It localises to the cell projection. It is found in the ruffle. Its subcellular location is the cytoskeleton. The protein localises to the microtubule organizing center. The protein resides in the centrosome. The enzyme catalyses L-seryl-[protein] + ATP = O-phospho-L-seryl-[protein] + ADP + H(+). It catalyses the reaction L-threonyl-[protein] + ATP = O-phospho-L-threonyl-[protein] + ADP + H(+). Its activity is regulated as follows. Inhibited by INK4 proteins (CDKN2C/p18-INK4c), aminopurvalanol, PD0332991, 4-(Pyrazol-4-yl)-pyrimidines and fisetin, a flavonol inhibitor. Activated by Thr-177 phosphorylation and Tyr-24 dephosphorylation. Stimulated by cyclin from herpesvirus saimiri (V-cyclin/ECLF2). Rapidly down-regulated prior to cell differentiation (e.g. erythroid and osteoblast). Its function is as follows. Serine/threonine-protein kinase involved in the control of the cell cycle and differentiation; promotes G1/S transition. Phosphorylates pRB/RB1 and NPM1. Interacts with D-type G1 cyclins during interphase at G1 to form a pRB/RB1 kinase and controls the entrance into the cell cycle. Involved in initiation and maintenance of cell cycle exit during cell differentiation; prevents cell proliferation and negatively regulates cell differentiation, but is required for the proliferation of specific cell types (e.g. erythroid and hematopoietic cells). Essential for cell proliferation within the dentate gyrus of the hippocampus and the subventricular zone of the lateral ventricles. Required during thymocyte development. Promotes the production of newborn neurons, probably by modulating G1 length. Promotes, at least in astrocytes, changes in patterns of gene expression, changes in the actin cytoskeleton including loss of stress fibers, and enhanced motility during cell differentiation. Prevents myeloid differentiation by interfering with RUNX1 and reducing its transcription transactivation activity, but promotes proliferation of normal myeloid progenitors. Delays senescence. Promotes the proliferation of beta-cells in pancreatic islets of Langerhans. May play a role in the centrosome organization during the cell cycle phases. This is Cyclin-dependent kinase 6 (CDK6) from Homo sapiens (Human).